Reading from the N-terminus, the 160-residue chain is D-aminoacyl-tRNA deacylase (160 aa).

The Gly-cisPro motif, important for rejection of L-amino acids motif lies at 146 to 147 (GP).

This sequence belongs to the DTD family. Homodimer.

The protein resides in the cytoplasm. The catalysed reaction is glycyl-tRNA(Ala) + H2O = tRNA(Ala) + glycine + H(+). The enzyme catalyses a D-aminoacyl-tRNA + H2O = a tRNA + a D-alpha-amino acid + H(+). An aminoacyl-tRNA editing enzyme that deacylates mischarged D-aminoacyl-tRNAs. Also deacylates mischarged glycyl-tRNA(Ala), protecting cells against glycine mischarging by AlaRS. Acts via tRNA-based rather than protein-based catalysis; rejects L-amino acids rather than detecting D-amino acids in the active site. By recycling D-aminoacyl-tRNA to D-amino acids and free tRNA molecules, this enzyme counteracts the toxicity associated with the formation of D-aminoacyl-tRNA entities in vivo and helps enforce protein L-homochirality. The sequence is that of D-aminoacyl-tRNA deacylase from Desulfovibrio desulfuricans (strain ATCC 27774 / DSM 6949 / MB).